The following is a 444-amino-acid chain: Methylenetetrahydrofolate--tRNA-(uracil-5-)-methyltransferase TrmFO (444 aa).

10-15 (GAGLAG) contacts FAD.

The protein belongs to the MnmG family. TrmFO subfamily. The cofactor is FAD.

Its subcellular location is the cytoplasm. The enzyme catalyses uridine(54) in tRNA + (6R)-5,10-methylene-5,6,7,8-tetrahydrofolate + NADH + H(+) = 5-methyluridine(54) in tRNA + (6S)-5,6,7,8-tetrahydrofolate + NAD(+). The catalysed reaction is uridine(54) in tRNA + (6R)-5,10-methylene-5,6,7,8-tetrahydrofolate + NADPH + H(+) = 5-methyluridine(54) in tRNA + (6S)-5,6,7,8-tetrahydrofolate + NADP(+). Its function is as follows. Catalyzes the folate-dependent formation of 5-methyl-uridine at position 54 (M-5-U54) in all tRNAs. In Streptococcus pneumoniae (strain 70585), this protein is Methylenetetrahydrofolate--tRNA-(uracil-5-)-methyltransferase TrmFO.